The chain runs to 556 residues: Formate--tetrahydrofolate ligase (556 aa).

65 to 72 (TPAGEGKS) lines the ATP pocket.

It belongs to the formate--tetrahydrofolate ligase family.

It carries out the reaction (6S)-5,6,7,8-tetrahydrofolate + formate + ATP = (6R)-10-formyltetrahydrofolate + ADP + phosphate. It functions in the pathway one-carbon metabolism; tetrahydrofolate interconversion. This Streptococcus suis (strain 98HAH33) protein is Formate--tetrahydrofolate ligase.